The primary structure comprises 358 residues: Heme A synthase 1 (358 aa).

5 helical membrane-spanning segments follow: residues 11–31 (LVGT…VGGG), 98–117 (WGRL…RLRG), 123–143 (LTAW…MGWY), 159–179 (LYLG…LWTA), and 199–219 (LLSV…LVAA). His262 provides a ligand contact to heme. 3 consecutive transmembrane segments (helical) span residues 264–284 (VAAT…LRAP), 292–312 (LFLL…STLV), and 315–335 (MAEL…ACIA). His322 serves as a coordination point for heme.

The protein belongs to the COX15/CtaA family. Type 2 subfamily. In terms of assembly, interacts with CtaB. It depends on heme b as a cofactor.

The protein localises to the cell membrane. It catalyses the reaction Fe(II)-heme o + 2 A + H2O = Fe(II)-heme a + 2 AH2. It participates in porphyrin-containing compound metabolism; heme A biosynthesis; heme A from heme O: step 1/1. Catalyzes the conversion of heme O to heme A by two successive hydroxylations of the methyl group at C8. The first hydroxylation forms heme I, the second hydroxylation results in an unstable dihydroxymethyl group, which spontaneously dehydrates, resulting in the formyl group of heme A. The polypeptide is Heme A synthase 1 (Acidiphilium cryptum (strain JF-5)).